The chain runs to 78 residues: Ferritin light chain (78 aa).

Residues 1-59 (EAALHLEKGLNQALVDLHALGSARADPHLCDFLENHFLDEEVKLIKKMGDHLTNLRRLS) form the Ferritin-like diiron domain.

The protein belongs to the ferritin family. In terms of assembly, oligomer of 24 subunits. There are two types of subunits: L (light) chain and H (heavy) chain. The major chain can be light or heavy, depending on the species and tissue type. The functional molecule forms a roughly spherical shell with a diameter of 12 nm and contains a central cavity into which the insoluble mineral iron core is deposited. Interacts with NCOA4.

It localises to the cytoplasmic vesicle. The protein resides in the autophagosome. Its subcellular location is the cytoplasm. The protein localises to the autolysosome. Its function is as follows. Stores iron in a soluble, non-toxic, readily available form. Important for iron homeostasis. Iron is taken up in the ferrous form and deposited as ferric hydroxides after oxidation. Also plays a role in delivery of iron to cells. Mediates iron uptake in capsule cells of the developing kidney. Delivery to lysosomes by the cargo receptor NCOA4 for autophagic degradation and release or iron. This chain is Ferritin light chain (FTL), found in Sus scrofa (Pig).